A 315-amino-acid chain; its full sequence is MKWSEISIHTTNEAIEPISNILHETGASGLVIEDPLDLERVEKAEFGELYDLDPALYPEEGVRIKAYLPMNSFLGETVEEIKSAINQLLIYDIDLGKNEVSLSEVHEEEWATAWKKYYKPVKISNRITITPTWEEYTPVSSDELIIELDPGMAFGTGTHPTTVLSIQGLEAYVKPGDLVMDVGCGSGVLSIAAAKLGADKVNAYDLDEIAVKSTKLNSKLNQIHESVKVKQNNLLEGVQQEADVIVSNILAEIIVRFVDDAWSNLKAGGYFITSGIIQNKKQLVIDNLTKQGFEVISLNEMEDWVSIVAKKPSEK.

Residues threonine 162, glycine 183, aspartate 205, and asparagine 248 each contribute to the S-adenosyl-L-methionine site.

Belongs to the methyltransferase superfamily. PrmA family.

It localises to the cytoplasm. The catalysed reaction is L-lysyl-[protein] + 3 S-adenosyl-L-methionine = N(6),N(6),N(6)-trimethyl-L-lysyl-[protein] + 3 S-adenosyl-L-homocysteine + 3 H(+). Functionally, methylates ribosomal protein L11. The sequence is that of Ribosomal protein L11 methyltransferase from Oceanobacillus iheyensis (strain DSM 14371 / CIP 107618 / JCM 11309 / KCTC 3954 / HTE831).